A 581-amino-acid chain; its full sequence is Chaperonin GroEL 1 (581 aa).

Residues 29–32, 86–90, glycine 413, and aspartate 492 each bind ATP; these read TIGP and DGTTT. Residues 522 to 541 form a disordered region; it reads PEPEAAGPGGPGADPMGGMG. Over residues 528–541 the composition is skewed to gly residues; it reads GPGGPGADPMGGMG.

Belongs to the chaperonin (HSP60) family. As to quaternary structure, forms a cylinder of 14 subunits composed of two heptameric rings stacked back-to-back. Interacts with the co-chaperonin GroES.

It localises to the cytoplasm. The enzyme catalyses ATP + H2O + a folded polypeptide = ADP + phosphate + an unfolded polypeptide.. Functionally, together with its co-chaperonin GroES, plays an essential role in assisting protein folding. The GroEL-GroES system forms a nano-cage that allows encapsulation of the non-native substrate proteins and provides a physical environment optimized to promote and accelerate protein folding. In Prochlorococcus marinus (strain MIT 9301), this protein is Chaperonin GroEL 1.